The chain runs to 423 residues: Exodeoxyribonuclease 7 large subunit (423 aa).

The protein belongs to the XseA family. In terms of assembly, heterooligomer composed of large and small subunits.

It is found in the cytoplasm. The enzyme catalyses Exonucleolytic cleavage in either 5'- to 3'- or 3'- to 5'-direction to yield nucleoside 5'-phosphates.. Bidirectionally degrades single-stranded DNA into large acid-insoluble oligonucleotides, which are then degraded further into small acid-soluble oligonucleotides. This Natranaerobius thermophilus (strain ATCC BAA-1301 / DSM 18059 / JW/NM-WN-LF) protein is Exodeoxyribonuclease 7 large subunit.